The sequence spans 65 residues: Hirudin-2 (65 aa).

Residues 1–3 are interaction with thrombin active site; that stretch reads ITY. 3 disulfides stabilise this stretch: C6-C14, C16-C28, and C22-C39. The disordered stretch occupies residues 39–65; sequence CVTGEGTPKPQSHNDGDFEEIPEEYLQ. T45 is a glycosylation site (O-linked (GalNAc...) threonine). The tract at residues 55–65 is interaction with fibrinogen-binding exosite of thrombin; that stretch reads DFEEIPEEYLQ. The segment covering 55–65 has biased composition (acidic residues); it reads DFEEIPEEYLQ. Y63 bears the Sulfotyrosine mark.

This sequence belongs to the protease inhibitor I14 (hirudin) family.

Its subcellular location is the secreted. Its function is as follows. Hirudin is a potent thrombin-specific protease inhibitor. It forms a stable non-covalent complex with alpha-thrombin, thereby abolishing its ability to cleave fibrinogen. The polypeptide is Hirudin-2 (Hirudo medicinalis (Medicinal leech)).